A 335-amino-acid chain; its full sequence is Tetraacyldisaccharide 4'-kinase (335 aa).

Residue 59–66 participates in ATP binding; the sequence is TAGGNGKT.

Belongs to the LpxK family.

It catalyses the reaction a lipid A disaccharide + ATP = a lipid IVA + ADP + H(+). The protein operates within glycolipid biosynthesis; lipid IV(A) biosynthesis; lipid IV(A) from (3R)-3-hydroxytetradecanoyl-[acyl-carrier-protein] and UDP-N-acetyl-alpha-D-glucosamine: step 6/6. Its function is as follows. Transfers the gamma-phosphate of ATP to the 4'-position of a tetraacyldisaccharide 1-phosphate intermediate (termed DS-1-P) to form tetraacyldisaccharide 1,4'-bis-phosphate (lipid IVA). The sequence is that of Tetraacyldisaccharide 4'-kinase from Vibrio cholerae serotype O1 (strain ATCC 39541 / Classical Ogawa 395 / O395).